We begin with the raw amino-acid sequence, 374 residues long: DNA-directed RNA polymerase subunit alpha (374 aa).

Positions 1–257 are alpha N-terminal domain (alpha-NTD); that stretch reads MSDNAHNLLY…KHFSIFENMD (257 aa). Positions 274–374 are alpha C-terminal domain (alpha-CTD); that stretch reads KDDILHKLIL…EKIRAKNIKG (101 aa).

This sequence belongs to the RNA polymerase alpha chain family. In terms of assembly, homodimer. The RNAP catalytic core consists of 2 alpha, 1 beta, 1 beta' and 1 omega subunit. When a sigma factor is associated with the core the holoenzyme is formed, which can initiate transcription.

It catalyses the reaction RNA(n) + a ribonucleoside 5'-triphosphate = RNA(n+1) + diphosphate. Its function is as follows. DNA-dependent RNA polymerase catalyzes the transcription of DNA into RNA using the four ribonucleoside triphosphates as substrates. This chain is DNA-directed RNA polymerase subunit alpha, found in Chlamydia pneumoniae (Chlamydophila pneumoniae).